The primary structure comprises 453 residues: Probable glycine dehydrogenase (decarboxylating) subunit 1 (453 aa).

The protein belongs to the GcvP family. N-terminal subunit subfamily. As to quaternary structure, the glycine cleavage system is composed of four proteins: P, T, L and H. In this organism, the P 'protein' is a heterodimer of two subunits.

It carries out the reaction N(6)-[(R)-lipoyl]-L-lysyl-[glycine-cleavage complex H protein] + glycine + H(+) = N(6)-[(R)-S(8)-aminomethyldihydrolipoyl]-L-lysyl-[glycine-cleavage complex H protein] + CO2. Functionally, the glycine cleavage system catalyzes the degradation of glycine. The P protein binds the alpha-amino group of glycine through its pyridoxal phosphate cofactor; CO(2) is released and the remaining methylamine moiety is then transferred to the lipoamide cofactor of the H protein. This Dictyoglomus turgidum (strain DSM 6724 / Z-1310) protein is Probable glycine dehydrogenase (decarboxylating) subunit 1.